The sequence spans 208 residues: Recombination protein RecR (208 aa).

The C4-type zinc finger occupies Cys60–Cys75. Residues Ser83–Ser178 form the Toprim domain.

This sequence belongs to the RecR family.

Functionally, may play a role in DNA repair. It seems to be involved in an RecBC-independent recombinational process of DNA repair. It may act with RecF and RecO. This Parabacteroides distasonis (strain ATCC 8503 / DSM 20701 / CIP 104284 / JCM 5825 / NCTC 11152) protein is Recombination protein RecR.